The sequence spans 414 residues: 5-aminolevulinate synthase (414 aa).

3 residues coordinate substrate: arginine 22, serine 133, and lysine 152. 3 residues coordinate pyridoxal 5'-phosphate: serine 185, histidine 213, and threonine 241. The active site involves lysine 244. An N6-(pyridoxal phosphate)lysine modification is found at lysine 244. Residues threonine 273 and threonine 274 each contribute to the pyridoxal 5'-phosphate site. Threonine 359 lines the substrate pocket.

It belongs to the class-II pyridoxal-phosphate-dependent aminotransferase family. As to quaternary structure, homodimer. The cofactor is pyridoxal 5'-phosphate.

The enzyme catalyses succinyl-CoA + glycine + H(+) = 5-aminolevulinate + CO2 + CoA. The protein operates within porphyrin-containing compound metabolism; protoporphyrin-IX biosynthesis; 5-aminolevulinate from glycine: step 1/1. This chain is 5-aminolevulinate synthase (hemA), found in Rickettsia conorii (strain ATCC VR-613 / Malish 7).